The sequence spans 103 residues: MVSLTSYAFVSMMLFSIGAIGVIARKNIFVIYMSIEMMLNGINLFLITFARYHFNIDPQIITVMVISIAAAEAAIFLSVIILLFRSKKSLNTDVFTSLTQGEN.

Helical transmembrane passes span 4–24 (LTSY…GVIA), 28–48 (IFVI…FLIT), and 64–84 (MVIS…ILLF).

It belongs to the complex I subunit 4L family. As to quaternary structure, NDH-1 is composed of 14 different subunits. Subunits NuoA, H, J, K, L, M, N constitute the membrane sector of the complex.

It is found in the cell inner membrane. It carries out the reaction a quinone + NADH + 5 H(+)(in) = a quinol + NAD(+) + 4 H(+)(out). Functionally, NDH-1 shuttles electrons from NADH, via FMN and iron-sulfur (Fe-S) centers, to quinones in the respiratory chain. The immediate electron acceptor for the enzyme in this species is believed to be ubiquinone. Couples the redox reaction to proton translocation (for every two electrons transferred, four hydrogen ions are translocated across the cytoplasmic membrane), and thus conserves the redox energy in a proton gradient. The chain is NADH-quinone oxidoreductase subunit K from Aliarcobacter butzleri (strain RM4018) (Arcobacter butzleri).